A 677-amino-acid chain; its full sequence is Amine oxidase [copper-containing] alpha 2, peroxisomal (677 aa).

320-331 (YLDCGEFGCGQT) contributes to the substrate binding site. The active-site Proton acceptor is the D322. C341 and C367 form a disulfide bridge. Position 407 to 412 (407 to 412 (VGNYDY)) interacts with substrate. The active-site Schiff-base intermediate with substrate; via topaquinone is Y410. Y410 is modified (2',4',5'-topaquinone). Residues H466 and H468 each coordinate Cu cation. Mn(2+) is bound by residues D477, D617, and I618. H628 lines the Cu cation pocket.

Belongs to the copper/topaquinone oxidase family. Homodimer. Cu cation is required as a cofactor. Requires Zn(2+) as cofactor. It depends on L-topaquinone as a cofactor. Post-translationally, topaquinone (TPQ) is generated by copper-dependent autoxidation of a specific tyrosyl residue. In terms of tissue distribution, expressed exclusively in leaves.

It localises to the peroxisome. It carries out the reaction a primary methyl amine + O2 + H2O = an aldehyde + H2O2 + NH4(+). It functions in the pathway amine and polyamine degradation; putrescine degradation. In terms of biological role, copper amine oxidase that can use putrescine and spermidine as substrates. Involved in putrescine catabolism in peroxisomes in response to salt stress. Regulates arginine-dependent nitric oxide (NO) production, a key signaling molecule regulating a wide range of physiological processes including responses to salt stress, by influencing arginine bioavailability. Modulates primary root growth. In Arabidopsis thaliana (Mouse-ear cress), this protein is Amine oxidase [copper-containing] alpha 2, peroxisomal.